Consider the following 215-residue polypeptide: ATP phosphoribosyltransferase (215 aa).

Belongs to the ATP phosphoribosyltransferase family. Short subfamily. As to quaternary structure, heteromultimer composed of HisG and HisZ subunits.

The protein resides in the cytoplasm. The enzyme catalyses 1-(5-phospho-beta-D-ribosyl)-ATP + diphosphate = 5-phospho-alpha-D-ribose 1-diphosphate + ATP. Its pathway is amino-acid biosynthesis; L-histidine biosynthesis; L-histidine from 5-phospho-alpha-D-ribose 1-diphosphate: step 1/9. Its function is as follows. Catalyzes the condensation of ATP and 5-phosphoribose 1-diphosphate to form N'-(5'-phosphoribosyl)-ATP (PR-ATP). Has a crucial role in the pathway because the rate of histidine biosynthesis seems to be controlled primarily by regulation of HisG enzymatic activity. This Gloeothece citriformis (strain PCC 7424) (Cyanothece sp. (strain PCC 7424)) protein is ATP phosphoribosyltransferase.